We begin with the raw amino-acid sequence, 270 residues long: FKBP-type peptidyl-prolyl cis-trans isomerase FkpA (270 aa).

The N-terminal stretch at methionine 1–alanine 25 is a signal peptide. The region spanning serine 164–lysine 249 is the PPIase FKBP-type domain.

It belongs to the FKBP-type PPIase family.

It is found in the periplasm. The catalysed reaction is [protein]-peptidylproline (omega=180) = [protein]-peptidylproline (omega=0). Its function is as follows. PPIases accelerate the folding of proteins. It catalyzes the cis-trans isomerization of proline imidic peptide bonds in oligopeptides. This is FKBP-type peptidyl-prolyl cis-trans isomerase FkpA (fkpA) from Escherichia coli (strain K12).